A 235-amino-acid polypeptide reads, in one-letter code: MFGRNPARGPDPGDGESLWIQEVFYTLQGEGPFSGQPSVFVRTAGCNLRCAWCDTDFESSAWKPPLPELLAVIDSRRPRVCDLVVLTGGEPLRQEVGPLVRALLARGLRVQIETNGTLWRDLPFGPGLSIVCSPKTRTLDPQLVPRIDAFKYVIAAGETDPTDGLPALSTQHPGRAERLFRPPPGVPVFVMPRDDHGTPARPGRGEDDNLAEAAASALRFGYRLCVQVHKILKIA.

Substrate contacts are provided by residues 27 to 29 (LQG) and Arg-42. The Radical SAM core domain maps to 33-235 (FSGQPSVFVR…VQVHKILKIA (203 aa)). The [4Fe-4S] cluster site is built by Cys-46, Cys-50, and Cys-53. Mg(2+) is bound at residue Thr-55. Thr-87 serves as a coordination point for substrate. S-adenosyl-L-methionine-binding positions include Gly-89 and 133–135 (SPK).

It belongs to the radical SAM superfamily. 7-carboxy-7-deazaguanine synthase family. Homodimer. Requires [4Fe-4S] cluster as cofactor. The cofactor is S-adenosyl-L-methionine. Mg(2+) is required as a cofactor.

It carries out the reaction 6-carboxy-5,6,7,8-tetrahydropterin + H(+) = 7-carboxy-7-deazaguanine + NH4(+). It functions in the pathway purine metabolism; 7-cyano-7-deazaguanine biosynthesis. Functionally, catalyzes the complex heterocyclic radical-mediated conversion of 6-carboxy-5,6,7,8-tetrahydropterin (CPH4) to 7-carboxy-7-deazaguanine (CDG), a step common to the biosynthetic pathways of all 7-deazapurine-containing compounds. The polypeptide is 7-carboxy-7-deazaguanine synthase (Rhodospirillum rubrum (strain ATCC 11170 / ATH 1.1.1 / DSM 467 / LMG 4362 / NCIMB 8255 / S1)).